The chain runs to 63 residues: Megourin-1 (63 aa).

Monomer. In terms of processing, contains four disulfide bonds.

It is found in the secreted. Functionally, has antimicrobial activity against Gram-positive bacteria and fungi. This chain is Megourin-1, found in Megoura viciae (Vetch aphid).